We begin with the raw amino-acid sequence, 348 residues long: S-adenosylmethionine-dependent nucleotide dehydratase RSAD2 (348 aa).

Residues 56 to 276 enclose the Radical SAM core domain; sequence SATPSSVNYH…LERHSSISCL (221 aa). The [4Fe-4S] cluster site is built by C70, C74, and C77.

It belongs to the radical SAM superfamily. RSAD2 family. The cofactor is [4Fe-4S] cluster. As to expression, expressed at low levels in spleen and head kidney.

The protein localises to the endoplasmic reticulum membrane. In terms of biological role, interferon-inducible iron-sulfur (4FE-4S) cluster-binding antiviral protein which plays a major role in the cell antiviral state induced by type I and type II interferon. The polypeptide is S-adenosylmethionine-dependent nucleotide dehydratase RSAD2 (Oncorhynchus mykiss (Rainbow trout)).